The sequence spans 62 residues: Toxin Tb2 (62 aa).

The region spanning 1–62 (KEGYAMDHEG…KVWDYATNKC (62 aa)) is the LCN-type CS-alpha/beta domain. 4 cysteine pairs are disulfide-bonded: Cys11–Cys62, Cys15–Cys38, Cys23–Cys43, and Cys27–Cys45. Cys62 carries the post-translational modification Cysteine amide.

This sequence belongs to the long (4 C-C) scorpion toxin superfamily. Sodium channel inhibitor family. Beta subfamily. In terms of tissue distribution, expressed by the venom gland.

It is found in the secreted. In terms of biological role, beta toxins bind voltage-independently at site-4 of sodium channels (Nav) and shift the voltage of activation toward more negative potentials thereby affecting sodium channel activation and promoting spontaneous and repetitive firing. This toxin is active on mammals. The sequence is that of Toxin Tb2 from Tityus bahiensis (Brazilian scorpion).